A 170-amino-acid chain; its full sequence is UPF0690 protein C1orf52 homolog (170 aa).

Disordered stretches follow at residues 1–56 and 124–170; these read MAAE…PDEL and SNVY…KRKV. Basic and acidic residues predominate over residues 46-56; that stretch reads DTKKLPGPDEL. Acidic residues predominate over residues 144-159; sequence EEEEAREDSPPSDDEQ.

Belongs to the UPF0690 family.

The protein is UPF0690 protein C1orf52 homolog of Xenopus tropicalis (Western clawed frog).